Consider the following 188-residue polypeptide: dCTP deaminase (188 aa).

DCTP contacts are provided by residues 111–116 (KSTYAR), 135–137 (TLE), Gln156, Tyr170, and Gln180. The active-site Proton donor/acceptor is the Glu137.

Belongs to the dCTP deaminase family. As to quaternary structure, homotrimer.

It catalyses the reaction dCTP + H2O + H(+) = dUTP + NH4(+). The protein operates within pyrimidine metabolism; dUMP biosynthesis; dUMP from dCTP (dUTP route): step 1/2. In terms of biological role, catalyzes the deamination of dCTP to dUTP. The chain is dCTP deaminase from Azoarcus sp. (strain BH72).